The sequence spans 403 residues: Protein IQ-DOMAIN 23 (403 aa).

Positions M1–T43 are disordered. The short motif at S10–A17 is the Nuclear localization signal element. The span at S27 to T43 shows a compositional bias: polar residues. The interval Q115–R133 is calmodulin-binding. 2 consecutive IQ domains span residues E116–K144 and L145–T167. 3 disordered regions span residues R176–H208, I242–R301, and G381–V403. The segment covering L257–R267 has biased composition (basic and acidic residues).

This sequence belongs to the IQD family. As to quaternary structure, binds to multiple calmodulin (CaM) in the presence of Ca(2+) and CaM-like proteins.

It is found in the nucleus. Its subcellular location is the nucleolus. The protein localises to the cytoplasm. The protein resides in the cytoskeleton. It localises to the cell membrane. Its function is as follows. May be involved in cooperative interactions with calmodulins or calmodulin-like proteins. Recruits calmodulin proteins to microtubules, thus being a potential scaffold in cellular signaling and trafficking. May associate with nucleic acids and regulate gene expression at the transcriptional or post-transcriptional level. The polypeptide is Protein IQ-DOMAIN 23 (Arabidopsis thaliana (Mouse-ear cress)).